The sequence spans 170 residues: Alpha-crystallin A chain (170 aa).

Residue methionine 1 is modified to N-acetylmethionine. The required for complex formation with BFSP1 and BFSP2 stretch occupies residues 1 to 63; sequence MDVTIQQPWF…RTALDSGISE (63 aa). Glutamine 6 is subject to Deamidated glutamine; partial. Residue serine 45 is modified to Phosphoserine. A Deamidated glutamine; partial modification is found at glutamine 50. The region spanning 52 to 161 is the sHSP domain; the sequence is LFRTALDSGI…SERPIPVSRE (110 aa). N6-acetyllysine occurs at positions 70 and 99. Histidine 100 contacts Zn(2+). The residue at position 101 (asparagine 101) is a Deamidated asparagine; partial. Zn(2+) is bound by residues glutamate 102, histidine 107, and histidine 151. The tract at residues 144–170 is disordered; that stretch reads PKIVDPSHSERPIPVSREEKPSSAPSS. A compositionally biased stretch (basic and acidic residues) spans 148–164; the sequence is DPSHSERPIPVSREEKP. O-linked (GlcNAc) serine glycosylation occurs at serine 159.

This sequence belongs to the small heat shock protein (HSP20) family. Heteromer composed of three CRYAA and one CRYAB subunits. Inter-subunit bridging via zinc ions enhances stability, which is crucial as there is no protein turn over in the lens. Can also form homodimers and homotetramers (dimers of dimers) which serve as the building blocks of homooligomers. Within homooligomers, the zinc-binding motif is created from residues of 3 different molecules. His-100 and Glu-102 from one molecule are ligands of the zinc ion, and His-107 and His-151 residues from additional molecules complete the site with tetrahedral coordination geometry. Part of a complex required for lens intermediate filament formation composed of BFSP1, BFSP2 and CRYAA. Acetylation at Lys-70 may increase chaperone activity. Post-translationally, undergoes age-dependent proteolytical cleavage at the C-terminus.

It localises to the cytoplasm. It is found in the nucleus. Functionally, contributes to the transparency and refractive index of the lens. Acts as a chaperone, preventing aggregation of various proteins under a wide range of stress conditions. Required for the correct formation of lens intermediate filaments as part of a complex composed of BFSP1, BFSP2 and CRYAA. The chain is Alpha-crystallin A chain (CRYAA) from Bradypus variegatus (Brown-throated three-fingered sloth).